We begin with the raw amino-acid sequence, 302 residues long: MFRATLAICGRTVVKRQFISSVSGESALPPNLRLPPNLIGVAAEKRPPPSGSDLPVVRRCEADVPAHLTPAQTWLESLGSRDSDQLGVVDLHPDVFSVPIRLDILHAVEVWQRNFKRISYANVKTRAEVRGGGRKPWQQKRTGRARHGSIRSPLWRGGGIIHGPRGPTSYYYMLPMKVRVQGLKIALSAKLAQDYLHIVDSLEIPTPDPQYLQDLVKHRQWGDSVLIVDVGEEFPQNILKATEDLKTVNIIPALGLNVHSLLKHESLVLTLEAVKFLEKKLLWHDVRYTPLYPFKLPYSDLP.

Belongs to the universal ribosomal protein uL4 family. In terms of assembly, component of the mitochondrial ribosome large subunit (39S) which comprises a 16S rRNA and about 50 distinct proteins.

It is found in the mitochondrion. The chain is Large ribosomal subunit protein uL4m (mrpl4) from Danio rerio (Zebrafish).